The chain runs to 2280 residues: Protein Ycf2 (2280 aa).

1631 to 1638 (GSIGTGRS) lines the ATP pocket.

The protein belongs to the Ycf2 family.

It localises to the plastid. It is found in the chloroplast stroma. Functionally, probable ATPase of unknown function. Its presence in a non-photosynthetic plant (Epifagus virginiana) and experiments in tobacco indicate that it has an essential function which is probably not related to photosynthesis. In Nicotiana tabacum (Common tobacco), this protein is Protein Ycf2 (ycf2-A).